A 242-amino-acid polypeptide reads, in one-letter code: N-alpha-acetyltransferase 60 (242 aa).

Residues 1–192 (MTEVVPSSAL…GGHPPWTILD (192 aa)) lie on the Cytoplasmic side of the membrane. One can recognise an N-acetyltransferase domain in the interval 13 to 182 (VSLRLLCHDD…DGFTYVLYIN (170 aa)). Tyrosine 38 is a binding site for substrate. The residue at position 79 (lysine 79) is an N6-acetyllysine; by autocatalysis. Residue tyrosine 97 is part of the active site. Position 99 (leucine 99) interacts with substrate. Residue 101–103 (LGV) coordinates acetyl-CoA. An N6-acetyllysine; by autocatalysis mark is found at lysine 105, lysine 109, and lysine 121. 109–114 (KHGIGS) provides a ligand contact to acetyl-CoA. The active site involves histidine 138. Acetyl-CoA is bound by residues asparagine 143 and 150-153 (YENR). The tract at residues 162–173 (PYYYSIRGVLKD) is required for homodimerization. Tyrosine 165 lines the substrate pocket. The helical intramembrane region spans 193-236 (YIQHLGSALANLSPCSIPHRIYRQAHSLLCSFLPWSSISTKGGI). The Cytoplasmic portion of the chain corresponds to 237–242 (EYSRTM).

Belongs to the acetyltransferase family. NAA60 subfamily. As to quaternary structure, monomer and homodimer; monomer in presence of substrate and homodimer in its absence. Acetylated: autoacetylation is required for optimal acetyltransferase activity.

It localises to the golgi apparatus membrane. It catalyses the reaction N-terminal L-methionyl-[transmembrane protein] + acetyl-CoA = N-terminal N(alpha)-acetyl-L-methionyl-[transmembrane protein] + CoA + H(+). It carries out the reaction L-lysyl-[protein] + acetyl-CoA = N(6)-acetyl-L-lysyl-[protein] + CoA + H(+). Functionally, N-alpha-acetyltransferase that specifically mediates the acetylation of N-terminal residues of the transmembrane proteins, with a strong preference for N-termini facing the cytosol. Displays N-terminal acetyltransferase activity towards a range of N-terminal sequences including those starting with Met-Lys, Met-Val, Met-Ala and Met-Met. Required for normal chromosomal segregation during anaphase. May also show histone acetyltransferase activity; such results are however unclear in vivo and would require additional experimental evidences. This Mus musculus (Mouse) protein is N-alpha-acetyltransferase 60 (Naa60).